A 361-amino-acid polypeptide reads, in one-letter code: Epoxyqueuosine reductase (361 aa).

Asp147 serves as the catalytic Proton donor. The 30-residue stretch at 193 to 222 (VDPAMDSEHCGRCSACLDICPTAAFVGPYR) folds into the 4Fe-4S ferredoxin-type domain. Positions 202, 205, 208, 212, 228, 255, 258, and 262 each coordinate [4Fe-4S] cluster.

The protein belongs to the QueG family. In terms of assembly, monomer. Cob(II)alamin is required as a cofactor. Requires [4Fe-4S] cluster as cofactor.

The protein localises to the cytoplasm. The catalysed reaction is epoxyqueuosine(34) in tRNA + AH2 = queuosine(34) in tRNA + A + H2O. Its pathway is tRNA modification; tRNA-queuosine biosynthesis. Catalyzes the conversion of epoxyqueuosine (oQ) to queuosine (Q), which is a hypermodified base found in the wobble positions of tRNA(Asp), tRNA(Asn), tRNA(His) and tRNA(Tyr). The protein is Epoxyqueuosine reductase of Pseudomonas aeruginosa (strain ATCC 15692 / DSM 22644 / CIP 104116 / JCM 14847 / LMG 12228 / 1C / PRS 101 / PAO1).